Consider the following 523-residue polypeptide: UDP-glucuronosyltransferase 3A2 (523 aa).

The N-terminal stretch at 1-22 (MAGQRVLLLVGFLLPGVLLSEA) is a signal peptide. The Extracellular portion of the chain corresponds to 23–483 (AKILTISTVG…YVFQQPWHEQ (461 aa)). An N-linked (GlcNAc...) asparagine glycan is attached at N52. Residues 484 to 504 (YLLDVFVFLLGLTLGTLWLCG) traverse the membrane as a helical segment. Over 505 to 523 (KLLGMAVWWLRGARKVKET) the chain is Cytoplasmic.

The protein belongs to the UDP-glycosyltransferase family.

The protein resides in the membrane. The catalysed reaction is glucuronate acceptor + UDP-alpha-D-glucuronate = acceptor beta-D-glucuronoside + UDP + H(+). UDP-glucuronosyltransferases catalyze phase II biotransformation reactions in which lipophilic substrates are conjugated with glucuronic acid to increase water solubility and enhance excretion. They are of major importance in the conjugation and subsequent elimination of potentially toxic xenobiotics and endogenous compounds. The protein is UDP-glucuronosyltransferase 3A2 (UGT3A2) of Homo sapiens (Human).